The chain runs to 720 residues: DNA ligase (720 aa).

NAD(+) contacts are provided by residues 57–61, 106–107, and E140; these read DAEYD and SL. The active-site N6-AMP-lysine intermediate is K142. Residues R163, E200, K316, and K340 each coordinate NAD(+). Zn(2+) is bound by residues C434, C437, C458, and C464. Residues 643–720 enclose the BRCT domain; that stretch reads AAASPVSGKT…TEDEWFELVG (78 aa).

Belongs to the NAD-dependent DNA ligase family. LigA subfamily. The cofactor is Mg(2+). Mn(2+) serves as cofactor.

It carries out the reaction NAD(+) + (deoxyribonucleotide)n-3'-hydroxyl + 5'-phospho-(deoxyribonucleotide)m = (deoxyribonucleotide)n+m + AMP + beta-nicotinamide D-nucleotide.. In terms of biological role, DNA ligase that catalyzes the formation of phosphodiester linkages between 5'-phosphoryl and 3'-hydroxyl groups in double-stranded DNA using NAD as a coenzyme and as the energy source for the reaction. It is essential for DNA replication and repair of damaged DNA. The sequence is that of DNA ligase from Xanthobacter autotrophicus (strain ATCC BAA-1158 / Py2).